The chain runs to 132 residues: Ribosome-binding factor A (132 aa).

It belongs to the RbfA family. As to quaternary structure, monomer. Binds 30S ribosomal subunits, but not 50S ribosomal subunits or 70S ribosomes.

It localises to the cytoplasm. One of several proteins that assist in the late maturation steps of the functional core of the 30S ribosomal subunit. Associates with free 30S ribosomal subunits (but not with 30S subunits that are part of 70S ribosomes or polysomes). Required for efficient processing of 16S rRNA. May interact with the 5'-terminal helix region of 16S rRNA. The polypeptide is Ribosome-binding factor A (Edwardsiella ictaluri (strain 93-146)).